The following is a 318-amino-acid chain: MERERLIKTVEAILRGAGYRVARLDLKGSCFDLVASRLFLLLFIKATVNIDTITEEQAEDLKRLAKFFKASPLIVGLRSKSGELEEGVVYERFGIYALRPETLYDALLNNELPAVFAERGGLYVRINGELLRELREKHGYSVNELAQLLGVSRKSLLNYERGEQAVSLDVAIQLEEIFDEALAEPIDILRAKVEADLNVKPETPLEREVFERLKKLGLGLVKVKKAPFNAISTEDDIRLLTGIDERKTRSTIKRAEMVAEVGRIVNSGGVFILEKTKAEVVSEVPLIPKESLEEVKDADELIELIDKLKKEIKEKLFS.

The region spanning 131-189 (LRELREKHGYSVNELAQLLGVSRKSLLNYERGEQAVSLDVAIQLEEIFDEALAEPIDIL) is the HTH cro/C1-type domain. Residues 142 to 161 (VNELAQLLGVSRKSLLNYER) constitute a DNA-binding region (H-T-H motif).

The protein is Putative HTH-type transcriptional regulatory protein TK0539 of Thermococcus kodakarensis (strain ATCC BAA-918 / JCM 12380 / KOD1) (Pyrococcus kodakaraensis (strain KOD1)).